A 1408-amino-acid polypeptide reads, in one-letter code: DNA-directed RNA polymerase subunit beta' (1408 aa).

Zn(2+)-binding residues include Cys-70, Cys-72, Cys-85, and Cys-88. Mg(2+) contacts are provided by Asp-460, Asp-462, and Asp-464. Residues Cys-814, Cys-888, Cys-895, and Cys-898 each contribute to the Zn(2+) site.

Belongs to the RNA polymerase beta' chain family. The RNAP catalytic core consists of 2 alpha, 1 beta, 1 beta' and 1 omega subunit. When a sigma factor is associated with the core the holoenzyme is formed, which can initiate transcription. Requires Mg(2+) as cofactor. It depends on Zn(2+) as a cofactor.

The enzyme catalyses RNA(n) + a ribonucleoside 5'-triphosphate = RNA(n+1) + diphosphate. Its function is as follows. DNA-dependent RNA polymerase catalyzes the transcription of DNA into RNA using the four ribonucleoside triphosphates as substrates. The protein is DNA-directed RNA polymerase subunit beta' of Baumannia cicadellinicola subsp. Homalodisca coagulata.